Here is a 319-residue protein sequence, read N- to C-terminus: Ribose-phosphate pyrophosphokinase (319 aa).

Residues 40–42 (DGE) and 99–100 (RQ) each bind ATP. The Mg(2+) site is built by histidine 134 and aspartate 174. Lysine 198 is an active-site residue. D-ribose 5-phosphate-binding positions include arginine 200, aspartate 224, and 228–232 (DTAGT).

Belongs to the ribose-phosphate pyrophosphokinase family. Class I subfamily. Homohexamer. It depends on Mg(2+) as a cofactor.

Its subcellular location is the cytoplasm. It carries out the reaction D-ribose 5-phosphate + ATP = 5-phospho-alpha-D-ribose 1-diphosphate + AMP + H(+). It functions in the pathway metabolic intermediate biosynthesis; 5-phospho-alpha-D-ribose 1-diphosphate biosynthesis; 5-phospho-alpha-D-ribose 1-diphosphate from D-ribose 5-phosphate (route I): step 1/1. Involved in the biosynthesis of the central metabolite phospho-alpha-D-ribosyl-1-pyrophosphate (PRPP) via the transfer of pyrophosphoryl group from ATP to 1-hydroxyl of ribose-5-phosphate (Rib-5-P). The protein is Ribose-phosphate pyrophosphokinase of Coxiella burnetii (strain RSA 493 / Nine Mile phase I).